Here is a 396-residue protein sequence, read N- to C-terminus: Serine/threonine-protein kinase VRK1 (396 aa).

Residues 37–317 form the Protein kinase domain; that stretch reads WKLGSPIGQG…LLDYVEKPLY (281 aa). ATP contacts are provided by residues 43–51 and Lys-71; that span reads IGQGGFGCI. A Glycyl lysine isopeptide (Lys-Gly) (interchain with G-Cter in SUMO2) cross-link involves residue Lys-71. Residue Asp-177 is the Proton acceptor of the active site. The segment at 352–396 is disordered; the sequence is KPVAKKRKKEAEESVESSVEDMECSDKQTEEATQTRSKTRKRVQK. The span at 364 to 374 shows a compositional bias: acidic residues; it reads ESVESSVEDME. Ser-376 is modified (phosphoserine). The interval 387 to 393 is required for interaction with the nucleosome; the sequence is RSKTRKR.

Belongs to the protein kinase superfamily. CK1 Ser/Thr protein kinase family. VRK subfamily. As to quaternary structure, interacts with HDAC1, KAT2B, SETDB1, KDM3A and KDM4A. Associates with the nucleosome through interactions with nucleosome DNA, histone H2A and histone H2B; the interaction with H2A and H2B is mediated by the nucleosome acidic patch, a cluster of negatively charged residues of H2A and H2B forming a cleft within the nucleosome core. Autophosphorylated at various serine and threonine residues. Autophosphorylation does not impair its ability to phosphorylate p53/TP53. Phosphorylation by PLK3 leads to induction of Golgi fragmentation during mitosis.

It localises to the nucleus. The protein localises to the cytoplasm. It is found in the cajal body. The catalysed reaction is L-seryl-[protein] + ATP = O-phospho-L-seryl-[protein] + ADP + H(+). It carries out the reaction L-threonyl-[protein] + ATP = O-phospho-L-threonyl-[protein] + ADP + H(+). Its activity is regulated as follows. Active in presence of Mn(2+), Mg(2+) and Zn(2+), but is not functional with Ca(2+) or Cu(2+). Has a higher affinity for Mn(2+) than for Mg(2+). RAN inhibits its autophosphorylation and its ability to phosphorylate histone H3. In terms of biological role, serine/threonine kinase involved in the regulation of key cellular processes including the cell cycle, nuclear condensation, transcription regulation, and DNA damage response. Controls chromatin organization and remodeling by mediating phosphorylation of histone H3 on 'Thr-4' and histone H2AX (H2aXT4ph). It also phosphorylates KAT5 in response to DNA damage, promoting KAT5 association with chromatin and histone acetyltransferase activity. Is involved in the regulation of cell cycle progression of neural progenitors, and is required for proper cortical neuronal migration. Is involved in neurite elongation and branching in motor neurons, and has an essential role in Cajal bodies assembly, acting through COIL phosphorylation and the control of coilin degradation. Involved in Golgi disassembly during the cell cycle: following phosphorylation by PLK3 during mitosis, it is required to induce Golgi fragmentation. Phosphorylates BANF1: disrupts its ability to bind DNA, reduces its binding to LEM domain-containing proteins and causes its relocalization from the nucleus to the cytoplasm. Phosphorylates TP53BP1 and p53/TP53 on 'Thr-18', preventing the interaction between p53/TP53 and MDM2. Phosphorylates ATF2 which activates its transcriptional activity. Phosphorylates JUN. The polypeptide is Serine/threonine-protein kinase VRK1 (VRK1) (Bos taurus (Bovine)).